We begin with the raw amino-acid sequence, 287 residues long: Ethylene-responsive transcription factor ERF116 (287 aa).

A DNA-binding region (AP2/ERF) is located at residues Y80–S140.

Belongs to the AP2/ERF transcription factor family. ERF subfamily.

Its subcellular location is the nucleus. Probably acts as a transcriptional activator. Binds to the GCC-box pathogenesis-related promoter element. May be involved in the regulation of gene expression by stress factors and by components of stress signal transduction pathways. The sequence is that of Ethylene-responsive transcription factor ERF116 (ERF116) from Arabidopsis thaliana (Mouse-ear cress).